The sequence spans 213 residues: Penicillin-binding protein activator LpoB (213 aa).

The signal sequence occupies residues 1–19 (MMKMNRYALVAALAIFLSG). The N-palmitoyl cysteine moiety is linked to residue Cys20. A lipid anchor (S-diacylglycerol cysteine) is attached at Cys20. Residues 26-71 (PAPVDEVKPAPEQPAEPQQPVPVVPSVPTIPQQPGPIEHEDQTAQP) form a disordered region. The span at 36 to 50 (PEQPAEPQQPVPVVP) shows a compositional bias: pro residues.

It belongs to the LpoB family. Interacts with PBP1b.

It is found in the cell outer membrane. In terms of biological role, regulator of peptidoglycan synthesis that is essential for the function of penicillin-binding protein 1B (PBP1b). The protein is Penicillin-binding protein activator LpoB of Citrobacter koseri (strain ATCC BAA-895 / CDC 4225-83 / SGSC4696).